Here is a 185-residue protein sequence, read N- to C-terminus: Putative RNA (cytidine(34)-2'-O)-methyltransferase (185 aa).

S-adenosyl-L-methionine contacts are provided by Ile-80, Gly-105, and Ile-126.

This sequence belongs to the class IV-like SAM-binding methyltransferase superfamily. RNA methyltransferase TrmH family. TrmL subfamily.

The protein resides in the cytoplasm. The catalysed reaction is cytidine(34) in tRNA + S-adenosyl-L-methionine = 2'-O-methylcytidine(34) in tRNA + S-adenosyl-L-homocysteine + H(+). The enzyme catalyses 5-carboxymethylaminomethyluridine(34) in tRNA(Leu) + S-adenosyl-L-methionine = 5-carboxymethylaminomethyl-2'-O-methyluridine(34) in tRNA(Leu) + S-adenosyl-L-homocysteine + H(+). Its function is as follows. Could methylate the ribose at the nucleotide 34 wobble position in tRNA. The polypeptide is Putative RNA (cytidine(34)-2'-O)-methyltransferase (Lactobacillus gasseri (strain ATCC 33323 / DSM 20243 / BCRC 14619 / CIP 102991 / JCM 1131 / KCTC 3163 / NCIMB 11718 / NCTC 13722 / AM63)).